A 110-amino-acid chain; its full sequence is IQ domain-containing protein J (110 aa).

Positions 47–67 (ESKVKIIQRAWREYLQRQDPL) constitute an IQ domain. The interval 63–99 (RQDPLEKRSPSPPSVSSDKLSSSVSMNTFSDSSTPVS) is disordered. A compositionally biased stretch (low complexity) spans 76-87 (SVSSDKLSSSVS). Positions 88-99 (MNTFSDSSTPVS) are enriched in polar residues.

This is IQ domain-containing protein J from Mus musculus (Mouse).